The following is a 266-amino-acid chain: Protein PYRICULARIA ORYZAE RESISTANCE 21 (266 aa).

The HMA domain maps to 1–68 (MGILVILVDL…IWCKAGKIIK (68 aa)). A metal cation-binding residues include Cys12 and Cys15. A disordered region spans residues 129 to 156 (CEKPKPCEKPPPCKPEEPPKPPPEKPPP). Positions 142 to 156 (KPEEPPKPPPEKPPP) are enriched in basic and acidic residues.

Its function is as follows. Involved in defense responses. Contributes to slowing defense responses toward Magnaporthe oryzae. In Oryza sativa subsp. japonica (Rice), this protein is Protein PYRICULARIA ORYZAE RESISTANCE 21.